A 32-amino-acid polypeptide reads, in one-letter code: MRIGIIFPVVIFITAVVFLAWFFIGGYAAPGA.

Residues 3–23 (IGIIFPVVIFITAVVFLAWFF) form a helical membrane-spanning segment.

The protein resides in the cell inner membrane. This is an uncharacterized protein from Escherichia coli (strain K12).